Consider the following 112-residue polypeptide: Macrodomain Ori protein (112 aa).

The tract at residues 91 to 112 (FHTLSGGKPQVEGAEDYTEADD) is disordered. The segment covering 103-112 (GAEDYTEADD) has biased composition (acidic residues).

The protein belongs to the MaoP family.

Involved in the organization of the Ori region of the chromosome into a macrodomain (MD). It constrains DNA mobility in the Ori macrodomain and limits long-distance DNA interactions with other chromosomal regions. The protein is Macrodomain Ori protein of Salmonella choleraesuis (strain SC-B67).